Here is a 219-residue protein sequence, read N- to C-terminus: Guanylate kinase (219 aa).

A Guanylate kinase-like domain is found at 15–194 (GLMFVLSSPS…AFAEVQSILK (180 aa)). 22–29 (SPSGAGKT) provides a ligand contact to ATP.

The protein belongs to the guanylate kinase family.

It localises to the cytoplasm. It carries out the reaction GMP + ATP = GDP + ADP. Functionally, essential for recycling GMP and indirectly, cGMP. The protein is Guanylate kinase of Nitrobacter hamburgensis (strain DSM 10229 / NCIMB 13809 / X14).